Reading from the N-terminus, the 790-residue chain is Phenylalanine--tRNA ligase beta subunit (790 aa).

The tRNA-binding domain occupies 39-154; the sequence is PDSLNTVVTG…ADTPLGESAC (116 aa). Residues 404 to 483 enclose the B5 domain; that stretch reads FSPLSLSVRP…FVQKTQKILP (80 aa). D457, D463, E466, and E467 together coordinate Mg(2+). An FDX-ACB domain is found at 694–790; sequence PIYPASSRDI…KLANIGQGNS (97 aa).

It belongs to the phenylalanyl-tRNA synthetase beta subunit family. Type 1 subfamily. As to quaternary structure, tetramer of two alpha and two beta subunits. Requires Mg(2+) as cofactor.

It localises to the cytoplasm. The enzyme catalyses tRNA(Phe) + L-phenylalanine + ATP = L-phenylalanyl-tRNA(Phe) + AMP + diphosphate + H(+). In Chlamydia trachomatis serovar A (strain ATCC VR-571B / DSM 19440 / HAR-13), this protein is Phenylalanine--tRNA ligase beta subunit.